Consider the following 271-residue polypeptide: 3-methyl-2-oxobutanoate hydroxymethyltransferase (271 aa).

Mg(2+) contacts are provided by Asp-53 and Asp-92. 3-methyl-2-oxobutanoate is bound by residues 53-54, Asp-92, and Lys-120; that span reads DS. Glu-122 is a binding site for Mg(2+). Residue Glu-189 is the Proton acceptor of the active site.

It belongs to the PanB family. Homodecamer; pentamer of dimers. Requires Mg(2+) as cofactor.

It localises to the cytoplasm. It carries out the reaction 3-methyl-2-oxobutanoate + (6R)-5,10-methylene-5,6,7,8-tetrahydrofolate + H2O = 2-dehydropantoate + (6S)-5,6,7,8-tetrahydrofolate. Its pathway is cofactor biosynthesis; (R)-pantothenate biosynthesis; (R)-pantoate from 3-methyl-2-oxobutanoate: step 1/2. Its function is as follows. Catalyzes the reversible reaction in which hydroxymethyl group from 5,10-methylenetetrahydrofolate is transferred onto alpha-ketoisovalerate to form ketopantoate. In Burkholderia mallei (strain NCTC 10247), this protein is 3-methyl-2-oxobutanoate hydroxymethyltransferase.